The primary structure comprises 155 residues: Transmembrane protein C1orf162 (155 aa).

Positions 1–28 (MGGNGSTCKPDTERQGTLSTAAPTTSPA) are disordered. Over residues 19-28 (STAAPTTSPA) the composition is skewed to low complexity. Residues 41–61 (ILAFCAGVLLTLLLIAFIFLI) traverse the membrane as a helical segment. Residues 92-114 (ADHSKPQAPDPHSDPPAKLSSIP) form a disordered region. Residue Ser-140 is modified to Phosphoserine.

It is found in the membrane. The sequence is that of Transmembrane protein C1orf162 (C1orf162) from Homo sapiens (Human).